The primary structure comprises 689 residues: Elongation factor G (689 aa).

A tr-type G domain is found at 9 to 283 (AKFRNIGIMA…AIIEFMPSPL (275 aa)). GTP-binding positions include 18–25 (AHIDAGKT), 82–86 (DTPGH), and 136–139 (NKMD).

The protein belongs to the TRAFAC class translation factor GTPase superfamily. Classic translation factor GTPase family. EF-G/EF-2 subfamily.

The protein resides in the cytoplasm. Catalyzes the GTP-dependent ribosomal translocation step during translation elongation. During this step, the ribosome changes from the pre-translocational (PRE) to the post-translocational (POST) state as the newly formed A-site-bound peptidyl-tRNA and P-site-bound deacylated tRNA move to the P and E sites, respectively. Catalyzes the coordinated movement of the two tRNA molecules, the mRNA and conformational changes in the ribosome. The sequence is that of Elongation factor G from Clostridium botulinum (strain ATCC 19397 / Type A).